Here is a 96-residue protein sequence, read N- to C-terminus: Co-chaperonin GroES (96 aa).

It belongs to the GroES chaperonin family. Heptamer of 7 subunits arranged in a ring. Interacts with the chaperonin GroEL.

The protein resides in the cytoplasm. Functionally, together with the chaperonin GroEL, plays an essential role in assisting protein folding. The GroEL-GroES system forms a nano-cage that allows encapsulation of the non-native substrate proteins and provides a physical environment optimized to promote and accelerate protein folding. GroES binds to the apical surface of the GroEL ring, thereby capping the opening of the GroEL channel. In Paraburkholderia phymatum (strain DSM 17167 / CIP 108236 / LMG 21445 / STM815) (Burkholderia phymatum), this protein is Co-chaperonin GroES.